The following is a 544-amino-acid chain: Lysophosphatidylcholine acyltransferase 2 (544 aa).

At Met1–Met58 the chain is on the cytoplasmic side. A helical; Signal-anchor for type II membrane protein transmembrane segment spans residues Ile59 to Leu79. Over Ala80–Asp544 the chain is Lumenal. The short motif at His146–Asp151 is the HXXXXD motif element. Residues Glu220–Cys223 carry the EGTC motif motif. EF-hand domains are found at residues Pro391–Pro426 and Asn428–Val463. Residues Asp404, Asn406, Asp408, Ser410, Glu415, Asp441, Asp443, Asp445, Tyr447, and Glu452 each contribute to the Ca(2+) site. Positions Thr520–Ser530 are enriched in polar residues. The interval Thr520 to Asp544 is disordered. Residues Pro531–Asp544 show a composition bias toward basic and acidic residues.

This sequence belongs to the 1-acyl-sn-glycerol-3-phosphate acyltransferase family.

It is found in the endoplasmic reticulum membrane. It localises to the golgi apparatus membrane. The protein localises to the cell membrane. The protein resides in the lipid droplet. It catalyses the reaction a 1-acyl-sn-glycero-3-phosphocholine + an acyl-CoA = a 1,2-diacyl-sn-glycero-3-phosphocholine + CoA. The enzyme catalyses a 1-O-alkyl-sn-glycero-3-phosphocholine + acetyl-CoA = a 1-O-alkyl-2-acetyl-sn-glycero-3-phosphocholine + CoA. It carries out the reaction a 1-acyl-sn-glycero-3-phosphate + an acyl-CoA = a 1,2-diacyl-sn-glycero-3-phosphate + CoA. The catalysed reaction is a 1-O-(1Z-alkenyl)-sn-glycero-3-phosphocholine + an acyl-CoA = a 1-O-(1Z-alkenyl)-2-acyl-sn-glycero-3-phosphocholine + CoA. It catalyses the reaction 1-hexadecanoyl-sn-glycero-3-phosphate + (9Z)-octadecenoyl-CoA = 1-hexadecanoyl-2-(9Z-octadecenoyl)-sn-glycero-3-phosphate + CoA. The enzyme catalyses 1-(9Z-octadecenoyl)-sn-glycero-3-phosphate + (9Z)-octadecenoyl-CoA = 1,2-di-(9Z-octadecenoyl)-sn-glycero-3-phosphate + CoA. It carries out the reaction 1-(9Z-octadecenoyl)-sn-glycero-3-phosphate + hexadecanoyl-CoA = 1-(9Z)-octadecenoyl-2-hexadecanoyl-sn-glycero-3-phosphate + CoA. The catalysed reaction is 1-heptadecanoyl-sn-glycero-3-phosphate + (9Z)-octadecenoyl-CoA = 1-heptadecanoyl-2-(9Z)-octadecenoyl-sn-glycero-3-phosphate + CoA. It catalyses the reaction 1-octadecanoyl-sn-glycero-3-phosphate + (9Z)-octadecenoyl-CoA = 1-octadecanoyl-2-(9Z-octadecenoyl)-sn-glycero-3-phosphate + CoA. The enzyme catalyses heptadecanoyl-CoA + 1-(9Z-octadecenoyl)-sn-glycero-3-phosphate = 1-(9Z)-octadecenoyl-2-heptadecanoyl-sn-glycero-3-phosphate + CoA. It carries out the reaction 1-(9Z-octadecenoyl)-sn-glycero-3-phosphate + (9Z,12Z)-octadecadienoyl-CoA = 1-(9Z)-octadecenoyl-2-(9Z,12Z)-octadecadienoyl-sn-glycero-3-phosphate + CoA. The catalysed reaction is 1-(9Z-octadecenoyl)-sn-glycero-3-phosphate + tetradecanoyl-CoA = 1-(9Z)-octadecenoyl-2-tetradecanoyl-sn-glycero-3-phosphate + CoA. It catalyses the reaction pentadecanoyl-CoA + 1-(9Z-octadecenoyl)-sn-glycero-3-phosphate = 1-(9Z)-octadecenoyl-2-pentadecanoyl-sn-glycero-3-phosphate + CoA. The enzyme catalyses nonadecanoyl-CoA + 1-(9Z-octadecenoyl)-sn-glycero-3-phosphate = 1-(9Z)-octadecenoyl-2-nonadecanoyl-sn-glycero-3-phosphate + CoA. It carries out the reaction 1-hexadecanoyl-sn-glycero-3-phosphocholine + (9Z)-octadecenoyl-CoA = 1-hexadecanoyl-2-(9Z-octadecenoyl)-sn-glycero-3-phosphocholine + CoA. The catalysed reaction is 1-O-hexadecyl-sn-glycero-3-phosphocholine + acetyl-CoA = 1-O-hexadecyl-2-acetyl-sn-glycero-3-phosphocholine + CoA. It catalyses the reaction 1-O-octadecyl-sn-glycero-3-phosphocholine + acetyl-CoA = 1-O-octadecyl-2-acetyl-sn-glycero-3-phosphocholine + CoA. The enzyme catalyses 1-hexadecanoyl-sn-glycero-3-phosphocholine + acetyl-CoA = 1-hexadecanoyl-2-acetyl-sn-glycero-3-phosphocholine + CoA. It carries out the reaction 1-octadecanoyl-sn-glycero-3-phosphocholine + acetyl-CoA = 1-octadecanoyl-2-acetyl-sn-glycero-3-phosphocholine + CoA. The catalysed reaction is a 1-O-(1Z-alkenyl)-sn-glycero-3-phosphocholine + acetyl-CoA = 1-O-(1Z)-alkenyl-2-acetyl-sn-glycero-3-phosphocholine + CoA. It catalyses the reaction 1-O-octadecyl-sn-glycero-3-phosphocholine + (5Z,8Z,11Z,14Z)-eicosatetraenoyl-CoA = 1-O-octadecyl-2-(5Z,8Z,11Z,14Z)-eicosatetraenoyl-sn-glycero-3-phosphocholine + CoA. It participates in lipid metabolism; phospholipid metabolism. Its function is as follows. Exhibits both acyltransferase and acetyltransferase activities. Activity is calcium-dependent. Catalyzes the conversion of lysophosphatidylcholine (1-acyl-sn-glycero-3-phosphocholine or LPC) into phosphatidylcholine (1,2-diacyl-sn-glycero-3-phosphocholine or PC). Catalyzes the conversion 1-acyl-sn-glycerol-3-phosphate (lysophosphatidic acid or LPA) into 1,2-diacyl-sn-glycerol-3-phosphate (phosphatidic acid or PA) by incorporating an acyl moiety at the sn-2 position of the glycerol backbone. Involved in platelet-activating factor (PAF) biosynthesis by catalyzing the conversion of the PAF precursor, 1-O-alkyl-sn-glycero-3-phosphocholine (lyso-PAF) into 1-O-alkyl-2-acetyl-sn-glycero-3-phosphocholine (PAF). Also converts lyso-PAF to 1-O-alkyl-2-acyl-sn-glycero-3-phosphocholine (PC), a major component of cell membranes and a PAF precursor. Under resting conditions, acyltransferase activity is preferred. Upon acute inflammatory stimulus, acetyltransferase activity is enhanced and PAF synthesis increases. Involved in the regulation of lipid droplet number and size. The chain is Lysophosphatidylcholine acyltransferase 2 (Lpcat2) from Rattus norvegicus (Rat).